Here is a 291-residue protein sequence, read N- to C-terminus: Pituitary-specific positive transcription factor 1 (291 aa).

A 9aaTAD motif is present at residues 5-13; it reads SFTSADTFI. The POU-specific domain maps to 124–198; sequence MDSPEIRELE…ILSKWLEEAE (75 aa). The segment at residues 214–273 is a DNA-binding region (homeobox); it reads KRKRRTTISVAAKDALERHFGEHSKPSSQEIMRMAEELNLEKEVVRVWFCNRRQREKRVK.

This sequence belongs to the POU transcription factor family. Class-1 subfamily. As to quaternary structure, interacts with PITX1. Interacts with LHX3. Interacts with ELK1.

It is found in the nucleus. Transcription factor involved in the specification of the lactotrope, somatotrope, and thyrotrope phenotypes in the developing anterior pituitary. Activates growth hormone and prolactin genes. Specifically binds to the consensus sequence 5'-TAAAT-3'. The chain is Pituitary-specific positive transcription factor 1 (Pou1f1) from Mus musculus (Mouse).